We begin with the raw amino-acid sequence, 449 residues long: Hyaluronidase-4 (449 aa).

The N-terminal stretch at M1–V23 is a signal peptide. 2 disulfides stabilise this stretch: C47/C340 and C211/C227. N-linked (GlcNAc...) asparagine glycosylation is found at N67, N103, and N111. E135 functions as the Proton donor in the catalytic mechanism. An N-linked (GlcNAc...) asparagine glycan is attached at N153. N357 is a glycosylation site (N-linked (GlcNAc...) asparagine). 3 disulfide bridges follow: C365–C376, C370–C427, and C429–C438. An N-linked (GlcNAc...) asparagine glycan is attached at N401. The EGF-like domain maps to C427 to C438.

This sequence belongs to the glycosyl hydrolase 56 family. In terms of assembly, monomer. In terms of tissue distribution, expressed by the venom gland.

Its subcellular location is the secreted. The catalysed reaction is Random hydrolysis of (1-&gt;4)-linkages between N-acetyl-beta-D-glucosamine and D-glucuronate residues in hyaluronate.. In terms of biological role, snake venom endo-hyaluronidase that degrades hyaluronan to smaller oligosaccharide fragments. In venom, it is not toxic by itself, but increases the diffusion of other venom proteins by degrading the extracellular matrix. In addition, it displays antiedematogenic activity. The polypeptide is Hyaluronidase-4 (Cerastes cerastes (Horned desert viper)).